The following is a 206-amino-acid chain: FMN-dependent NADH:quinone oxidoreductase (206 aa).

Residues 15 to 17, 94 to 97, and 138 to 141 each bind FMN; these read SVS, MYNF, and TRGG.

Belongs to the azoreductase type 1 family. As to quaternary structure, homodimer. The cofactor is FMN.

The catalysed reaction is 2 a quinone + NADH + H(+) = 2 a 1,4-benzosemiquinone + NAD(+). The enzyme catalyses N,N-dimethyl-1,4-phenylenediamine + anthranilate + 2 NAD(+) = 2-(4-dimethylaminophenyl)diazenylbenzoate + 2 NADH + 2 H(+). In terms of biological role, quinone reductase that provides resistance to thiol-specific stress caused by electrophilic quinones. Also exhibits azoreductase activity. Catalyzes the reductive cleavage of the azo bond in aromatic azo compounds to the corresponding amines. The polypeptide is FMN-dependent NADH:quinone oxidoreductase (Rhizobium meliloti (strain 1021) (Ensifer meliloti)).